A 429-amino-acid chain; its full sequence is Probable M18 family aminopeptidase 2 (429 aa).

Zn(2+) is bound by residues H82, H156, and H401.

It belongs to the peptidase M18 family. Zn(2+) serves as cofactor.

This is Probable M18 family aminopeptidase 2 from Pseudomonas putida (strain GB-1).